The sequence spans 122 residues: Small ribosomal subunit protein uS13 (122 aa).

The interval 98-122 (VRGQRTHTNARTRKGPAKAIAGKKK) is disordered.

This sequence belongs to the universal ribosomal protein uS13 family. In terms of assembly, part of the 30S ribosomal subunit. Forms a loose heterodimer with protein S19. Forms two bridges to the 50S subunit in the 70S ribosome.

Functionally, located at the top of the head of the 30S subunit, it contacts several helices of the 16S rRNA. In the 70S ribosome it contacts the 23S rRNA (bridge B1a) and protein L5 of the 50S subunit (bridge B1b), connecting the 2 subunits; these bridges are implicated in subunit movement. Contacts the tRNAs in the A and P-sites. This chain is Small ribosomal subunit protein uS13, found in Roseobacter denitrificans (strain ATCC 33942 / OCh 114) (Erythrobacter sp. (strain OCh 114)).